A 239-amino-acid polypeptide reads, in one-letter code: Probable transcriptional regulatory protein ABO_1803 (239 aa).

This sequence belongs to the TACO1 family.

It localises to the cytoplasm. The chain is Probable transcriptional regulatory protein ABO_1803 from Alcanivorax borkumensis (strain ATCC 700651 / DSM 11573 / NCIMB 13689 / SK2).